The primary structure comprises 454 residues: Chromosomal replication initiator protein DnaA (454 aa).

Positions 1-80 are domain I, interacts with DnaA modulators; the sequence is MNLSNLWQSC…NPELRISLKE (80 aa). Residues 80 to 117 are domain II; it reads EGVKPAPKIVESTPNTSLRSESAVDFQAESSASVKFES. Positions 118–335 are domain III, AAA+ region; that stretch reads HLNTKHLFDN…GALNRVKAMQ (218 aa). Positions 163, 165, 166, and 167 each coordinate ATP. Positions 336-454 are domain IV, binds dsDNA; that stretch reads DFKGGDIDID…WANLIRTLSA (119 aa).

This sequence belongs to the DnaA family. As to quaternary structure, oligomerizes as a right-handed, spiral filament on DNA at oriC.

It localises to the cytoplasm. Functionally, plays an essential role in the initiation and regulation of chromosomal replication. ATP-DnaA binds to the origin of replication (oriC) to initiate formation of the DNA replication initiation complex once per cell cycle. Binds the DnaA box (a 9 base pair repeat at the origin) and separates the double-stranded (ds)DNA. Forms a right-handed helical filament on oriC DNA; dsDNA binds to the exterior of the filament while single-stranded (ss)DNA is stabiized in the filament's interior. The ATP-DnaA-oriC complex binds and stabilizes one strand of the AT-rich DNA unwinding element (DUE), permitting loading of DNA polymerase. After initiation quickly degrades to an ADP-DnaA complex that is not apt for DNA replication. Binds acidic phospholipids. This is Chromosomal replication initiator protein DnaA from Haemophilus influenzae (strain ATCC 51907 / DSM 11121 / KW20 / Rd).